Here is a 256-residue protein sequence, read N- to C-terminus: Alcohol dehydrogenase (256 aa).

Residue 12-35 (FVAGLGGIGLDTSKELVKRDLKNL) coordinates NAD(+). Residue serine 140 participates in substrate binding. Tyrosine 153 acts as the Proton acceptor in catalysis.

The protein belongs to the short-chain dehydrogenases/reductases (SDR) family. Homodimer.

It carries out the reaction a primary alcohol + NAD(+) = an aldehyde + NADH + H(+). It catalyses the reaction a secondary alcohol + NAD(+) = a ketone + NADH + H(+). This Drosophila mauritiana (Fruit fly) protein is Alcohol dehydrogenase (Adh).